The following is a 190-amino-acid chain: Putative manganese efflux pump MntP (190 aa).

6 helical membrane passes run 6 to 26 (IWLL…TSGI), 36 to 56 (FFIM…IGWF), 61 to 81 (FSHL…AFWG), 108 to 128 (LAIA…FVGI), 138 to 158 (IVII…IGVF), and 169 to 189 (LWGG…HLFL).

The protein belongs to the MntP (TC 9.B.29) family.

The protein localises to the cell inner membrane. In terms of biological role, probably functions as a manganese efflux pump. In Phocaeicola vulgatus (strain ATCC 8482 / DSM 1447 / JCM 5826 / CCUG 4940 / NBRC 14291 / NCTC 11154) (Bacteroides vulgatus), this protein is Putative manganese efflux pump MntP.